A 134-amino-acid polypeptide reads, in one-letter code: Probable 4-amino-4-deoxy-L-arabinose-phosphoundecaprenol flippase subunit ArnF (134 aa).

The Cytoplasmic segment spans residues 1–5 (MNRRR). A helical membrane pass occupies residues 6-26 (GILFALASVLLVSVAQLSMRW). At 27–45 (SMTRLPRPDQWLSVPSVDS) the chain is on the periplasmic side. The chain crosses the membrane as a helical span at residues 46–66 (VALAVVLAAIFAYALSMLCWL). Residues 67 to 77 (AALRDLPLGRA) lie on the Cytoplasmic side of the membrane. Residues 78–98 (YSLLSISYALVYLLAASLPLF) traverse the membrane as a helical segment. Topologically, residues 99–101 (NES) are periplasmic. The helical transmembrane segment at 102–122 (FSFSKSLGVALVMLGVITINT) threads the bilayer. The Cytoplasmic segment spans residues 123–134 (RPARAPELRSSP).

It belongs to the ArnF family. In terms of assembly, heterodimer of ArnE and ArnF.

It localises to the cell inner membrane. Its pathway is bacterial outer membrane biogenesis; lipopolysaccharide biosynthesis. Functionally, translocates 4-amino-4-deoxy-L-arabinose-phosphoundecaprenol (alpha-L-Ara4N-phosphoundecaprenol) from the cytoplasmic to the periplasmic side of the inner membrane. The sequence is that of Probable 4-amino-4-deoxy-L-arabinose-phosphoundecaprenol flippase subunit ArnF from Pseudomonas fluorescens (strain Pf0-1).